The following is a 236-amino-acid chain: Large ribosomal subunit protein eL6 (236 aa).

It belongs to the eukaryotic ribosomal protein eL6 family.

This is Large ribosomal subunit protein eL6 (rpl6) from Dictyostelium discoideum (Social amoeba).